Here is a 479-residue protein sequence, read N- to C-terminus: Probable cytosol aminopeptidase (479 aa).

Positions 247 and 252 each coordinate Mn(2+). Residue Lys-259 is part of the active site. Residues Asp-270, Asp-329, and Glu-331 each contribute to the Mn(2+) site. Residue Arg-333 is part of the active site.

Belongs to the peptidase M17 family. Mn(2+) serves as cofactor.

It is found in the cytoplasm. It catalyses the reaction Release of an N-terminal amino acid, Xaa-|-Yaa-, in which Xaa is preferably Leu, but may be other amino acids including Pro although not Arg or Lys, and Yaa may be Pro. Amino acid amides and methyl esters are also readily hydrolyzed, but rates on arylamides are exceedingly low.. The catalysed reaction is Release of an N-terminal amino acid, preferentially leucine, but not glutamic or aspartic acids.. In terms of biological role, presumably involved in the processing and regular turnover of intracellular proteins. Catalyzes the removal of unsubstituted N-terminal amino acids from various peptides. This is Probable cytosol aminopeptidase from Vesicomyosocius okutanii subsp. Calyptogena okutanii (strain HA).